A 554-amino-acid polypeptide reads, in one-letter code: Valerianol synthase TPS1B (554 aa).

Residues aspartate 307 and aspartate 311 each coordinate Mg(2+). A DDXXD motif motif is present at residues 326-330 (VQRWD). Mg(2+) is bound by residues aspartate 452, serine 456, and glutamate 460.

This sequence belongs to the terpene synthase family. Requires Mg(2+) as cofactor.

It catalyses the reaction (2E,6E)-farnesyl diphosphate + H2O = valerianol + diphosphate. It functions in the pathway secondary metabolite biosynthesis; terpenoid biosynthesis. Its function is as follows. Terpene synthase that catalyzes the biosynthesis of the terpene valerianol, which is a volatile compound of floral scent. In Camellia hiemalis (Camellia), this protein is Valerianol synthase TPS1B.